The sequence spans 627 residues: Putative ankyrin repeat protein L122 (627 aa).

12 ANK repeats span residues 61-94 (KGWT…DVHI), 98-130 (KGRT…DINS), 153-186 (HACY…DPNI), 190-223 (YGKT…NANH), 228-259 (AETV…DINH), 263-296 (IGFT…NINL), 300-333 (DGFT…DIND), 337-370 (NNVT…DLEI), 374-407 (YDWT…NVNV), 411-444 (LGHT…NPNL), 448-480 (DKNT…DSNT), and 491-523 (REYN…NYSD).

The protein is Putative ankyrin repeat protein L122 of Acanthamoeba polyphaga (Amoeba).